The sequence spans 256 residues: Ciliary microtubule associated protein 1A (256 aa).

STPGR repeat units lie at residues 66–92 (PGPG…IYGR), 181–206 (PGPG…MTAR), and 217–242 (PGPG…FGIR). The disordered stretch occupies residues 91-115 (GRPRDISSFRTPGPGSYSPERAGKS).

Belongs to the CIMAP family.

The protein resides in the cytoplasm. It localises to the cytoskeleton. Its subcellular location is the flagellum axoneme. Its function is as follows. Outer dense fibers are filamentous structures located on the outside of the axoneme in the midpiece and principal piece of the mammalian sperm tail. May help to maintain the passive elastic structures and elastic recoil of the sperm tail. This is Ciliary microtubule associated protein 1A (cimap1a) from Xenopus laevis (African clawed frog).